The primary structure comprises 301 residues: Aspartate carbamoyltransferase catalytic subunit (301 aa).

Residues arginine 54 and threonine 55 each coordinate carbamoyl phosphate. Lysine 82 is an L-aspartate binding site. Carbamoyl phosphate-binding residues include arginine 104, histidine 132, and glutamine 135. L-aspartate-binding residues include arginine 165 and arginine 217. 2 residues coordinate carbamoyl phosphate: glycine 257 and proline 258.

It belongs to the aspartate/ornithine carbamoyltransferase superfamily. ATCase family. In terms of assembly, heterododecamer (2C3:3R2) of six catalytic PyrB chains organized as two trimers (C3), and six regulatory PyrI chains organized as three dimers (R2).

The enzyme catalyses carbamoyl phosphate + L-aspartate = N-carbamoyl-L-aspartate + phosphate + H(+). The protein operates within pyrimidine metabolism; UMP biosynthesis via de novo pathway; (S)-dihydroorotate from bicarbonate: step 2/3. Functionally, catalyzes the condensation of carbamoyl phosphate and aspartate to form carbamoyl aspartate and inorganic phosphate, the committed step in the de novo pyrimidine nucleotide biosynthesis pathway. This is Aspartate carbamoyltransferase catalytic subunit from Thermus aquaticus.